A 319-amino-acid polypeptide reads, in one-letter code: MKPENKLPVLDLISAEMKTVVNTLQPDLPSWPATGTIAEQRQYYTLERRFWNAGAPEMATRAYMVPTKYGQVETRLFCPQPDSPATLFYLHGGGFILGNLDTHDRIMRLLASYSQCTVIGIDYPLSPEARFPQAIEEIVAACCYFHQQAEDYQINMSRIGFAGDSAGAMLALASALWLRDKQIDCGKIVGVLLWYGLYGLRDSVTRRLLGGVWDGLTQQDLQMYEEAYLSNDADRESPYYCLFNNDLTREVPPCFIAGAEFDPLLDDSRLLYQTLAAHQQPCEFKLYPGTLHAFLHYSRMMKTADEALRDGAQFFTAQL.

Positions histidine 91–glycine 93 match the Involved in the stabilization of the negatively charged intermediate by the formation of the oxyanion hole motif. Residues serine 165, aspartate 262, and histidine 292 contribute to the active site.

This sequence belongs to the 'GDXG' lipolytic enzyme family. In terms of assembly, homodimer. Interacts with MalT and MelA.

Its subcellular location is the cytoplasm. Displays esterase activity towards short chain fatty esters (acyl chain length of up to 8 carbons). Able to hydrolyze triacetylglycerol (triacetin) and tributyrylglycerol (tributyrin), but not trioleylglycerol (triolein) or cholesterol oleate. Negatively regulates MalT activity by antagonizing maltotriose binding. Inhibits MelA galactosidase activity. The chain is Acetyl esterase from Shigella boydii serotype 4 (strain Sb227).